A 126-amino-acid polypeptide reads, in one-letter code: Large ribosomal subunit protein bL12 (126 aa).

The protein belongs to the bacterial ribosomal protein bL12 family. Homodimer. Part of the ribosomal stalk of the 50S ribosomal subunit. Forms a multimeric L10(L12)X complex, where L10 forms an elongated spine to which 2 to 4 L12 dimers bind in a sequential fashion. Binds GTP-bound translation factors.

Functionally, forms part of the ribosomal stalk which helps the ribosome interact with GTP-bound translation factors. Is thus essential for accurate translation. In Saccharophagus degradans (strain 2-40 / ATCC 43961 / DSM 17024), this protein is Large ribosomal subunit protein bL12.